A 103-amino-acid chain; its full sequence is Large ribosomal subunit protein bL21 (103 aa).

This sequence belongs to the bacterial ribosomal protein bL21 family. As to quaternary structure, part of the 50S ribosomal subunit. Contacts protein L20.

Its function is as follows. This protein binds to 23S rRNA in the presence of protein L20. The chain is Large ribosomal subunit protein bL21 from Histophilus somni (strain 129Pt) (Haemophilus somnus).